The chain runs to 517 residues: Succinyl-CoA:3-ketoacid coenzyme A transferase 2, mitochondrial (517 aa).

A mitochondrion-targeting transit peptide spans 1–39 (MAALRLLASVLGRGVPAGGSGLALSQGCARCFATSPRLR). E341 acts as the 5-glutamyl coenzyme A thioester intermediate in catalysis.

The protein belongs to the 3-oxoacid CoA-transferase family. As to quaternary structure, homodimer. In terms of tissue distribution, testis specific.

Its subcellular location is the mitochondrion. The enzyme catalyses a 3-oxo acid + succinyl-CoA = a 3-oxoacyl-CoA + succinate. Its pathway is ketone metabolism; succinyl-CoA degradation; acetoacetyl-CoA from succinyl-CoA: step 1/1. Key enzyme for ketone body catabolism. Transfers the CoA moiety from succinate to acetoacetate. Formation of the enzyme-CoA intermediate proceeds via an unstable anhydride species formed between the carboxylate groups of the enzyme and substrate. This Homo sapiens (Human) protein is Succinyl-CoA:3-ketoacid coenzyme A transferase 2, mitochondrial (OXCT2).